A 681-amino-acid polypeptide reads, in one-letter code: Cell cycle checkpoint protein RAD17 (681 aa).

The short motif at 17–25 (DWVDPSFDD) is the RAD1-binding motif element. The interval 42–61 (VNNSSHRRKNGPSTLESSRF) is disordered. Thr55 is subject to Phosphothreonine. Phosphoserine occurs at positions 71 and 86. An ATP-binding site is contributed by 137–144 (GPPGCGKT). 2 disordered regions span residues 344 to 377 (SSKG…KPDR) and 606 to 681 (HGMI…SDGT). At Ser359 the chain carries Phosphoserine. An interaction with MCM7 region spans residues 432 to 681 (LVEPEEVVEM…IIEDYESDGT (250 aa)). Residues 631–662 (EPTQATVPETWSLPLSQNSASELPASQPQPFS) show a composition bias toward polar residues. At Thr633 the chain carries Phosphothreonine; by ATM. Phosphoserine; by ATR and ATM occurs at positions 646 and 656. Positions 666–681 (DMEENIIIEDYESDGT) are enriched in acidic residues.

This sequence belongs to the rad17/RAD24 family. As to quaternary structure, part of a DNA-binding complex containing RFC2, RFC3, RFC4 and RFC5. Interacts with RAD1 and RAD9 within the 9-1-1 (RAD1-RAD9-HUS1) complex. Interacts with RAD9B, POLE, SNU13 and MCM7. DNA damage promotes interaction with ATR or ATM and disrupts interaction with the 9-1-1 (RAD1-RAD9-HUS1) complex. Interacts (when phosphorylated) with NBN; promoting recruitment of the MRN complex to DNA damage sites. In terms of processing, phosphorylation on Ser-646 and Ser-656 is cell cycle-regulated, enhanced by genotoxic stress, and required for activation of checkpoint signaling. Phosphorylation is mediated by ATR upon UV or replication arrest, whereas it may be mediated both by ATR and ATM upon ionizing radiation. Phosphorylation on both sites is required for interaction with RAD1 but dispensable for interaction with RFC3 or RFC4. Phosphorylation at Thr-633 by ATM in response to DNA damage promotes interaction with NBN and recruitment of the MRN complex to DNA damage sites. In terms of tissue distribution, overexpressed in various cancer cell lines and in colon carcinoma (at protein level). Isoform 2 and isoform 3 are the most abundant isoforms in non irradiated cells (at protein level). Ubiquitous at low levels. Highly expressed in testis, where it is expressed within the germinal epithelium of the seminiferous tubuli. Weakly expressed in seminomas (testicular tumors).

Its subcellular location is the nucleus. It localises to the chromosome. In terms of biological role, essential for sustained cell growth, maintenance of chromosomal stability, and ATR-dependent checkpoint activation upon DNA damage. Has a weak ATPase activity required for binding to chromatin. Participates in the recruitment of the 9-1-1 (RAD1-RAD9-HUS1) complex and RHNO1 onto chromatin, and in CHEK1 activation. Involved in homologous recombination by mediating recruitment of the MRN complex to DNA damage sites. May also serve as a sensor of DNA replication progression. The protein is Cell cycle checkpoint protein RAD17 of Homo sapiens (Human).